Reading from the N-terminus, the 598-residue chain is Nuclear receptor subfamily 4 group A member 2 (598 aa).

The tract at residues 1–22 is disordered; the sequence is MPCVQAQYGSSPQGASPASQSY. The span at 8–22 shows a compositional bias: low complexity; the sequence is YGSSPQGASPASQSY. Residues 260–335 constitute a DNA-binding region (nuclear receptor); sequence EGLCAVCGDN…VGMVKEVVRT (76 aa). 2 NR C4-type zinc fingers span residues 263–283 and 299–323; these read CAVCGDNAACQHYGVRTCEGC and CLANKNCPVDKRRRNRCQYCRFQKC. The Bipartite nuclear localization signal (NLS1) motif lies at 287–314; that stretch reads FKRTVQKNAKYVCLANKNCPVDKRRRNR. Residues 337 to 361 form a disordered region; that stretch reads SLKGRRGRLPSKPKSPQDPSPPSPP. A Nuclear localization signal (NLS1) motif is present at residues 338–350; sequence LKGRRGRLPSKPK. Pro residues predominate over residues 352 to 361; the sequence is PQDPSPPSPP. Positions 360 to 595 constitute an NR LBD domain; that stretch reads PPVSLISALV…AIIDKLFLDT (236 aa). The nuclear export sequence (NES1) motif lies at 443–452; sequence FLELFVLRLA. A nuclear export sequence (NES2) motif is present at residues 568–577; that stretch reads QGLQRIFYLK.

It belongs to the nuclear hormone receptor family. NR4 subfamily. Interacts with SFPQ, NCOR2, SIN3A and HADC1. The interaction with NCOR2 increases in the absence of PITX3. Interacts with PER2. Shows a ubiquitous distribution in the cerebral cortex, hippocampus, thalamus, amygdala, and midbrain. Expression increases in prenatally stressed adult offspring in the ventral tegmental area, whereas no changes are observed in the substantia nigra area (at protein level). Not expressed in quiescent liver but is rapidly induced following partial hepatectomy and is specific to hepatic growth as it is not induced in other mitogen-treated cells. Expressed at very low levels in the lung, spleen and stomach and at high levels in the brain.

The protein resides in the cytoplasm. Its subcellular location is the nucleus. Transcriptional regulator which is important for the differentiation and maintenance of meso-diencephalic dopaminergic (mdDA) neurons during development. It is crucial for expression of a set of genes such as SLC6A3, SLC18A2, TH and DRD2 which are essential for development of mdDA neurons. May confer liver-specific regulation of delayed-early genes induced later in the G1 phase of regeneration along with NR4A1. The chain is Nuclear receptor subfamily 4 group A member 2 (Nr4a2) from Rattus norvegicus (Rat).